We begin with the raw amino-acid sequence, 984 residues long: Putative formate dehydrogenase SAV2309 (984 aa).

Positions 3–79 (EHLVVTLDGK…PMTVNTVNND (77 aa)) constitute a 2Fe-2S ferredoxin-type domain. Positions 37, 48, 51, and 63 each coordinate [2Fe-2S] cluster. The 41-residue stretch at 79 to 119 (DVKDAQKEALDRILEKHMLYCTVCDYNNGDCEIHNTMDAWG) folds into the 4Fe-4S His(Cys)3-ligated-type domain. Residues H95, C99, C102, C109, C147, C150, C153, C157, C190, C193, C196, C200, C264, C267, C271, and C299 each contribute to the [4Fe-4S] cluster site. 4Fe-4S ferredoxin-type domains follow at residues 138–165 (PFYR…VNET) and 181–211 (NDVP…VNME). The segment at 252–984 (MRKERIKKTK…YVFPGNQVDK (733 aa)) is formate dehydrogenase. The region spanning 257 to 313 (IKKTKTVCTYCGVGCSFEVWTKDREILKVQPSHDSPANKIVTCVKGKFSWGHINSDQ) is the 4Fe-4S Mo/W bis-MGD-type domain.

This sequence in the C-terminal section; belongs to the prokaryotic molybdopterin-containing oxidoreductase family. It depends on [2Fe-2S] cluster as a cofactor. [4Fe-4S] cluster serves as cofactor. Requires Mo-bis(molybdopterin guanine dinucleotide) as cofactor.

It catalyses the reaction formate + NAD(+) = CO2 + NADH. The polypeptide is Putative formate dehydrogenase SAV2309 (Staphylococcus aureus (strain Mu50 / ATCC 700699)).